The chain runs to 321 residues: Lipoyl synthase (321 aa).

[4Fe-4S] cluster is bound by residues Cys-68, Cys-73, Cys-79, Cys-94, Cys-98, Cys-101, and Ser-308. Positions 80 to 297 constitute a Radical SAM core domain; it reads FNHGTATFMI…KALADELGFT (218 aa).

The protein belongs to the radical SAM superfamily. Lipoyl synthase family. It depends on [4Fe-4S] cluster as a cofactor.

The protein localises to the cytoplasm. It catalyses the reaction [[Fe-S] cluster scaffold protein carrying a second [4Fe-4S](2+) cluster] + N(6)-octanoyl-L-lysyl-[protein] + 2 oxidized [2Fe-2S]-[ferredoxin] + 2 S-adenosyl-L-methionine + 4 H(+) = [[Fe-S] cluster scaffold protein] + N(6)-[(R)-dihydrolipoyl]-L-lysyl-[protein] + 4 Fe(3+) + 2 hydrogen sulfide + 2 5'-deoxyadenosine + 2 L-methionine + 2 reduced [2Fe-2S]-[ferredoxin]. It functions in the pathway protein modification; protein lipoylation via endogenous pathway; protein N(6)-(lipoyl)lysine from octanoyl-[acyl-carrier-protein]: step 2/2. Catalyzes the radical-mediated insertion of two sulfur atoms into the C-6 and C-8 positions of the octanoyl moiety bound to the lipoyl domains of lipoate-dependent enzymes, thereby converting the octanoylated domains into lipoylated derivatives. In Shewanella putrefaciens (strain CN-32 / ATCC BAA-453), this protein is Lipoyl synthase.